A 372-amino-acid polypeptide reads, in one-letter code: Queuine tRNA-ribosyltransferase (372 aa).

Asp92 (proton acceptor) is an active-site residue. Residues 92–96 (DSGGY), Asp146, Gln188, and Gly215 each bind substrate. Positions 246–252 (GIGSLRE) are RNA binding. Asp265 acts as the Nucleophile in catalysis. Residues 270–274 (TRLGR) form an RNA binding; important for wobble base 34 recognition region. Residues Cys303, Cys305, Cys308, and His334 each contribute to the Zn(2+) site.

This sequence belongs to the queuine tRNA-ribosyltransferase family. Homodimer. Within each dimer, one monomer is responsible for RNA recognition and catalysis, while the other monomer binds to the replacement base PreQ1. Requires Zn(2+) as cofactor.

It carries out the reaction 7-aminomethyl-7-carbaguanine + guanosine(34) in tRNA = 7-aminomethyl-7-carbaguanosine(34) in tRNA + guanine. Its pathway is tRNA modification; tRNA-queuosine biosynthesis. Functionally, catalyzes the base-exchange of a guanine (G) residue with the queuine precursor 7-aminomethyl-7-deazaguanine (PreQ1) at position 34 (anticodon wobble position) in tRNAs with GU(N) anticodons (tRNA-Asp, -Asn, -His and -Tyr). Catalysis occurs through a double-displacement mechanism. The nucleophile active site attacks the C1' of nucleotide 34 to detach the guanine base from the RNA, forming a covalent enzyme-RNA intermediate. The proton acceptor active site deprotonates the incoming PreQ1, allowing a nucleophilic attack on the C1' of the ribose to form the product. After dissociation, two additional enzymatic reactions on the tRNA convert PreQ1 to queuine (Q), resulting in the hypermodified nucleoside queuosine (7-(((4,5-cis-dihydroxy-2-cyclopenten-1-yl)amino)methyl)-7-deazaguanosine). This chain is Queuine tRNA-ribosyltransferase, found in Prochlorococcus marinus (strain MIT 9312).